A 79-amino-acid polypeptide reads, in one-letter code: D-alanyl carrier protein (79 aa).

The 77-residue stretch at Met-1–Glu-77 folds into the Carrier domain. An O-(pantetheine 4'-phosphoryl)serine modification is found at Ser-35.

This sequence belongs to the DltC family. In terms of processing, 4'-phosphopantetheine is transferred from CoA to a specific serine of apo-DCP.

The protein localises to the cytoplasm. Its pathway is cell wall biogenesis; lipoteichoic acid biosynthesis. Carrier protein involved in the D-alanylation of lipoteichoic acid (LTA). The loading of thioester-linked D-alanine onto DltC is catalyzed by D-alanine--D-alanyl carrier protein ligase DltA. The DltC-carried D-alanyl group is further transferred to cell membrane phosphatidylglycerol (PG) by forming an ester bond, probably catalyzed by DltD. D-alanylation of LTA plays an important role in modulating the properties of the cell wall in Gram-positive bacteria, influencing the net charge of the cell wall. This Lactobacillus acidophilus (strain ATCC 700396 / NCK56 / N2 / NCFM) protein is D-alanyl carrier protein.